Here is a 248-residue protein sequence, read N- to C-terminus: ATP synthase subunit a, chloroplastic (248 aa).

5 helical membrane-spanning segments follow: residues 38–58, 96–116, 135–155, 200–220, and 221–241; these read QVLI…AIAV, VPFI…GALL, INTT…AGLT, LVVV…VMFL, and GLFT…AYIG.

Belongs to the ATPase A chain family. In terms of assembly, F-type ATPases have 2 components, CF(1) - the catalytic core - and CF(0) - the membrane proton channel. CF(1) has five subunits: alpha(3), beta(3), gamma(1), delta(1), epsilon(1). CF(0) has four main subunits: a, b, b' and c.

It localises to the plastid. The protein localises to the chloroplast thylakoid membrane. Functionally, key component of the proton channel; it plays a direct role in the translocation of protons across the membrane. This is ATP synthase subunit a, chloroplastic from Nymphaea alba (White water-lily).